A 176-amino-acid chain; its full sequence is Ribosome rescue factor SmrB (176 aa).

In terms of domain architecture, Smr spans 93 to 168 (LDLHGYRQSE…GDAALLVLID (76 aa)).

The protein belongs to the SmrB family. In terms of assembly, associates with collided ribosomes, but not with correctly translating polysomes.

Its function is as follows. Acts as a ribosome collision sensor. Detects stalled/collided disomes (pairs of ribosomes where the leading ribosome is stalled and a second ribosome has collided with it) and endonucleolytically cleaves mRNA at the 5' boundary of the stalled ribosome. Stalled/collided disomes form a new interface (primarily via the 30S subunits) that binds SmrB. Cleaved mRNA becomes available for tmRNA ligation, leading to ribosomal subunit dissociation and rescue of stalled ribosomes. The polypeptide is Ribosome rescue factor SmrB (Shewanella sp. (strain MR-4)).